A 72-amino-acid polypeptide reads, in one-letter code: Disintegrin cotiarin (72 aa).

One can recognise a Disintegrin domain in the interval 1-72 (EAGEECDCGA…SADCPRNRFH (72 aa)). 6 disulfides stabilise this stretch: C6–C21, C8–C16, C15–C38, C29–C35, C34–C59, and C47–C66. The Cell attachment site motif lies at 51–53 (RGD). Residues 51-72 (RGDNPDDRCTGQSADCPRNRFH) are disordered.

Belongs to the venom metalloproteinase (M12B) family. P-II subfamily. P-IIa sub-subfamily. Monomer. In terms of tissue distribution, expressed by the venom gland.

It localises to the secreted. Inhibits fibrinogen interaction with platelets. Acts by binding to alpha-IIb/beta-3 (ITGA2B/ITGB3) on the platelet surface and inhibits aggregation induced by ADP, thrombin, platelet-activating factor and collagen. The sequence is that of Disintegrin cotiarin from Bothrops cotiara (Cotiara).